The following is a 385-amino-acid chain: Acetate kinase (385 aa).

N9 lines the Mg(2+) pocket. K16 serves as a coordination point for ATP. Position 87 (R87) interacts with substrate. D144 acts as the Proton donor/acceptor in catalysis. Residues 202-206 (HLGSG) and 277-279 (DMR) each bind ATP. Position 373 (E373) interacts with Mg(2+).

This sequence belongs to the acetokinase family. As to quaternary structure, homodimer. Requires Mg(2+) as cofactor. Mn(2+) serves as cofactor.

It localises to the cytoplasm. It catalyses the reaction acetate + ATP = acetyl phosphate + ADP. Its pathway is metabolic intermediate biosynthesis; acetyl-CoA biosynthesis; acetyl-CoA from acetate: step 1/2. Its function is as follows. Catalyzes the formation of acetyl phosphate from acetate and ATP. Can also catalyze the reverse reaction. The polypeptide is Acetate kinase (Rickettsia felis (strain ATCC VR-1525 / URRWXCal2) (Rickettsia azadi)).